A 29-amino-acid polypeptide reads, in one-letter code: Cytochrome b6-f complex subunit 8 (29 aa).

A helical membrane pass occupies residues 3–23; sequence ILTLGWVSILALFTWSIAMVV.

Belongs to the PetN family. As to quaternary structure, the 4 large subunits of the cytochrome b6-f complex are cytochrome b6, subunit IV (17 kDa polypeptide, PetD), cytochrome f and the Rieske protein, while the 4 small subunits are PetG, PetL, PetM and PetN. The complex functions as a dimer.

It localises to the cellular thylakoid membrane. In terms of biological role, component of the cytochrome b6-f complex, which mediates electron transfer between photosystem II (PSII) and photosystem I (PSI), cyclic electron flow around PSI, and state transitions. This is Cytochrome b6-f complex subunit 8 from Microcystis aeruginosa (strain NIES-843 / IAM M-2473).